Reading from the N-terminus, the 384-residue chain is Carbamoyl phosphate synthase small chain (384 aa).

A CPSase region spans residues 1-189; sequence MSKSALLVLE…GLPEAKDDSE (189 aa). Residues Ser-47, Gly-241, and Gly-243 each contribute to the L-glutamine site. Residues 193 to 380 form the Glutamine amidotransferase type-1 domain; that stretch reads HVVAYDFGAK…IELIKLSVNE (188 aa). The active-site Nucleophile is the Cys-269. Residues Leu-270, Gln-273, Asn-311, Gly-313, and Phe-314 each contribute to the L-glutamine site. Active-site residues include His-353 and Glu-355.

This sequence belongs to the CarA family. As to quaternary structure, composed of two chains; the small (or glutamine) chain promotes the hydrolysis of glutamine to ammonia, which is used by the large (or ammonia) chain to synthesize carbamoyl phosphate. Tetramer of heterodimers (alpha,beta)4.

It carries out the reaction hydrogencarbonate + L-glutamine + 2 ATP + H2O = carbamoyl phosphate + L-glutamate + 2 ADP + phosphate + 2 H(+). The enzyme catalyses L-glutamine + H2O = L-glutamate + NH4(+). The protein operates within amino-acid biosynthesis; L-arginine biosynthesis; carbamoyl phosphate from bicarbonate: step 1/1. It participates in pyrimidine metabolism; UMP biosynthesis via de novo pathway; (S)-dihydroorotate from bicarbonate: step 1/3. Its function is as follows. Small subunit of the glutamine-dependent carbamoyl phosphate synthetase (CPSase). CPSase catalyzes the formation of carbamoyl phosphate from the ammonia moiety of glutamine, carbonate, and phosphate donated by ATP, constituting the first step of 2 biosynthetic pathways, one leading to arginine and/or urea and the other to pyrimidine nucleotides. The small subunit (glutamine amidotransferase) binds and cleaves glutamine to supply the large subunit with the substrate ammonia. The protein is Carbamoyl phosphate synthase small chain of Photobacterium profundum (strain SS9).